The primary structure comprises 252 residues: Major prion protein (252 aa).

The signal sequence occupies residues 1–22 (MANLGYWMLVLFVATWSDLGLC). The interaction with GRB2, ERI3 and SYN1 stretch occupies residues 23 to 229 (KKRPKPGGWN…ESQAYYQRGS (207 aa)). Residues 26–104 (PKPGGWNTGG…HNQWNKPSKP (79 aa)) are disordered. Repeat copies occupy residues 51-58 (PQGGGWGQ), 59-66 (PHGGGWGQ), 67-74 (PHGGGWGQ), 75-82 (PHGGGWGQ), and 83-90 (PHGGGWGQ). Residues 51–90 (PQGGGWGQPHGGGWGQPHGGGWGQPHGGGWGQPHGGGWGQ) are 5 X 8 AA tandem repeats of P-H-G-G-G-W-G-Q. Over residues 52–92 (QGGGWGQPHGGGWGQPHGGGWGQPHGGGWGQPHGGGWGQAG) the composition is skewed to gly residues. Positions 60, 61, 62, 68, 69, 70, 76, 77, 78, 84, 85, and 86 each coordinate Cu(2+). Cys178 and Cys213 form a disulfide bridge. 2 N-linked (GlcNAc...) asparagine glycosylation sites follow: Asn180 and Asn196. Ser229 carries GPI-anchor amidated serine lipidation. The propeptide at 230–252 (SMVLFSSPPVILLISFLIFLIVG) is removed in mature form.

Belongs to the prion family. Monomer and homodimer. Has a tendency to aggregate into amyloid fibrils containing a cross-beta spine, formed by a steric zipper of superposed beta-strands. Soluble oligomers may represent an intermediate stage on the path to fibril formation. Copper binding may promote oligomerization. Interacts with GRB2, APP, ERI3/PRNPIP and SYN1. Mislocalized cytosolically exposed PrP interacts with MGRN1; this interaction alters MGRN1 subcellular location and causes lysosomal enlargement. Interacts with KIAA1191.

It localises to the cell membrane. The protein resides in the golgi apparatus. Its primary physiological function is unclear. Has cytoprotective activity against internal or environmental stresses. May play a role in neuronal development and synaptic plasticity. May be required for neuronal myelin sheath maintenance. May play a role in iron uptake and iron homeostasis. Soluble oligomers are toxic to cultured neuroblastoma cells and induce apoptosis (in vitro). Association with GPC1 (via its heparan sulfate chains) targets PRNP to lipid rafts. Also provides Cu(2+) or Zn(2+) for the ascorbate-mediated GPC1 deaminase degradation of its heparan sulfate side chains. The polypeptide is Major prion protein (PRNP) (Ateles paniscus (Black spider monkey)).